Consider the following 723-residue polypeptide: 1,3-alpha-isomaltosidase (723 aa).

Aspartate 451 (nucleophile) is an active-site residue. The active site involves glutamate 454. Aspartate 516 (proton donor) is an active-site residue. Position 581 (histidine 581) interacts with substrate.

The protein belongs to the glycosyl hydrolase 31 family.

It is found in the cytoplasm. The catalysed reaction is cyclobis-(1-&gt;3)-alpha-D-isomaltosyl + 2 H2O = 2 isomaltose. Involved in the intracellular degradation of the cyclic tetrasaccharide cyclobis-(1-6)-alpha-nigerosyl (CNN) formed extracellularly from starch. Catalyzes the hydrolysis of the alpha-1,3-glucosidic linkage of cyclobis-(1-6)-alpha-nigerosyl (CNN) to yield isomaltose via a possible linear tetrasaccharide. It has a strong preference for the alpha-(1-3)-isomaltosyl moiety. This Kribbella flavida (strain DSM 17836 / JCM 10339 / NBRC 14399) protein is 1,3-alpha-isomaltosidase.